We begin with the raw amino-acid sequence, 118 residues long: Large ribosomal subunit protein bL20 (118 aa).

Belongs to the bacterial ribosomal protein bL20 family.

Functionally, binds directly to 23S ribosomal RNA and is necessary for the in vitro assembly process of the 50S ribosomal subunit. It is not involved in the protein synthesizing functions of that subunit. This is Large ribosomal subunit protein bL20 from Desulfovibrio desulfuricans (strain ATCC 27774 / DSM 6949 / MB).